The primary structure comprises 122 residues: Large ribosomal subunit protein uL14 (122 aa).

The protein belongs to the universal ribosomal protein uL14 family. In terms of assembly, part of the 50S ribosomal subunit. Forms a cluster with proteins L3 and L19. In the 70S ribosome, L14 and L19 interact and together make contacts with the 16S rRNA in bridges B5 and B8.

Its function is as follows. Binds to 23S rRNA. Forms part of two intersubunit bridges in the 70S ribosome. This is Large ribosomal subunit protein uL14 from Protochlamydia amoebophila (strain UWE25).